We begin with the raw amino-acid sequence, 170 residues long: Small ribosomal subunit protein bS18c (170 aa).

2 disordered regions span residues 1–60 (MYTS…GPGD) and 149–170 (NRNLRNNNQNLRNNNRNLSSDC). 7 repeats span residues 4-10 (SKQPFLK), 11-17 (SKQPFSK), 18-24 (SEQPFSK), 25-31 (SEQPFRK), 32-38 (SKQTFRK), 39-45 (FKQPFRK), and 46-52 (SKQPFRR). Residues 4–52 (SKQPFLKSKQPFSKSEQPFSKSEQPFRKSKQTFRKFKQPFRKSKQPFRR) form a 7 X 7 AA tandem repeats region. A compositionally biased stretch (polar residues) spans 13–26 (QPFSKSEQPFSKSE). Basic residues predominate over residues 30–55 (RKSKQTFRKFKQPFRKSKQPFRRRPR).

It belongs to the bacterial ribosomal protein bS18 family. Part of the 30S ribosomal subunit.

Its subcellular location is the plastid. The protein resides in the chloroplast. The protein is Small ribosomal subunit protein bS18c (rps18) of Secale cereale (Rye).